Here is a 246-residue protein sequence, read N- to C-terminus: Myogenic factor 5 (246 aa).

The tract at residues R1–C38 is disordered. A bHLH domain is found at D73 to L124. The segment at E210–L246 is disordered. The segment covering G236–L246 has biased composition (pro residues).

In terms of assembly, efficient DNA binding requires dimerization with another bHLH protein.

The protein localises to the nucleus. Its function is as follows. Acts as a transcriptional activator that promotes transcription of muscle-specific target genes and plays a role in muscle differentiation. Induces fibroblasts to differentiate into myoblasts. Probable sequence specific DNA-binding protein. In Coturnix japonica (Japanese quail), this protein is Myogenic factor 5 (MYF5).